We begin with the raw amino-acid sequence, 78 residues long: Large ribosomal subunit protein bL28 (78 aa).

Residues 1-21 (MSRVCQVTGKSPITGNNVSHA) form a disordered region. Residues 8–21 (TGKSPITGNNVSHA) are compositionally biased toward polar residues.

It belongs to the bacterial ribosomal protein bL28 family.

The chain is Large ribosomal subunit protein bL28 from Hahella chejuensis (strain KCTC 2396).